The primary structure comprises 407 residues: uncharacterized protein (407 aa).

A coiled-coil region spans residues 10 to 37 (DKLEQLANDVVTELTDMENKYKDLHVEL).

This is an uncharacterized protein from Bacillus subtilis (strain 168).